The sequence spans 168 residues: NADH-quinone oxidoreductase subunit B (168 aa).

[4Fe-4S] cluster-binding residues include C49, C50, C114, and C144.

The protein belongs to the complex I 20 kDa subunit family. In terms of assembly, NDH-1 is composed of 14 different subunits. Subunits NuoB, C, D, E, F, and G constitute the peripheral sector of the complex. The cofactor is [4Fe-4S] cluster.

It localises to the cell membrane. It catalyses the reaction a quinone + NADH + 5 H(+)(in) = a quinol + NAD(+) + 4 H(+)(out). In terms of biological role, NDH-1 shuttles electrons from NADH, via FMN and iron-sulfur (Fe-S) centers, to quinones in the respiratory chain. Couples the redox reaction to proton translocation (for every two electrons transferred, four hydrogen ions are translocated across the cytoplasmic membrane), and thus conserves the redox energy in a proton gradient. In Wolbachia sp. subsp. Brugia malayi (strain TRS), this protein is NADH-quinone oxidoreductase subunit B.